The sequence spans 34 residues: Cuticle protein 9 (34 aa).

This is Cuticle protein 9 from Blaberus craniifer (Death's head cockroach).